Here is a 249-residue protein sequence, read N- to C-terminus: Proteasome activator complex subunit 1 (249 aa).

A disordered region spans residues 60–102; the sequence is PLDIPVPDPVKEKEKEERKKQQEKEDKDEKKKGEDEDKGPPCG. Basic and acidic residues predominate over residues 68–98; sequence PVKEKEKEERKKQQEKEDKDEKKKGEDEDKG.

This sequence belongs to the PA28 family. As to quaternary structure, heterodimer of PSME1 and PSME2, which forms a hexameric ring. PSME1 can form homoheptamers.

In terms of biological role, implicated in immunoproteasome assembly and required for efficient antigen processing. The PA28 activator complex enhances the generation of class I binding peptides by altering the cleavage pattern of the proteasome. The protein is Proteasome activator complex subunit 1 (PSME1) of Homo sapiens (Human).